Here is a 777-residue protein sequence, read N- to C-terminus: Semaphorin-3D (777 aa).

An N-terminal signal peptide occupies residues 1–37 (MNVTKDENPRSRSQDLHLFHAWMMLIMTVLFLPVTET). In terms of domain architecture, Sema spans 44–531 (RLKLTYKDLL…SWDGLVQLSL (488 aa)). Cysteines 117 and 128 form a disulfide. N-linked (GlcNAc...) asparagine glycosylation is present at N139. 4 disulfide bridges follow: C146-C155, C286-C398, C310-C358, and C534-C552. Positions 533–585 (RCDTYGKACADCCLARDPYCAWDGNACSRYAPTSKRRARRQDVKYGDPITQCW) constitute a PSI domain. Positions 592-680 (SHETADEKVI…TFIHTIVKLT (89 aa)) constitute an Ig-like C2-type domain. N-linked (GlcNAc...) asparagine glycans are attached at residues N607 and N724. A disulfide bridge connects residues C665 and C731. Over residues 740–765 (RRQRNKGSPKWKHMQEMKKKRNRRHH) the composition is skewed to basic residues. The disordered stretch occupies residues 740-777 (RRQRNKGSPKWKHMQEMKKKRNRRHHRDLDELQRSVAT). The segment covering 766–777 (RDLDELQRSVAT) has biased composition (basic and acidic residues).

It belongs to the semaphorin family.

Its subcellular location is the secreted. Functionally, induces the collapse and paralysis of neuronal growth cones. Could potentially act as repulsive cues toward specific neuronal populations. Binds to neuropilin. The sequence is that of Semaphorin-3D (Sema3d) from Mus musculus (Mouse).